A 203-amino-acid polypeptide reads, in one-letter code: Small ribosomal subunit protein eS1 (203 aa).

It belongs to the eukaryotic ribosomal protein eS1 family.

The sequence is that of Small ribosomal subunit protein eS1 from Methanosarcina acetivorans (strain ATCC 35395 / DSM 2834 / JCM 12185 / C2A).